Here is a 1081-residue protein sequence, read N- to C-terminus: MKFRDLLNDHIISHWRDKYIDYEYLKDLIDREYHNAPNSLNNSMMIDMSQSINNTIAEQYSVNDISSMVTKGGINDSPTTDIEVDETADSPAIPSPIISHSNINSNNNNNGGTNSVGFSHLHRQLNRQNSNLKNSSNSINLLKADDSNNIEKHVKSYFDQRNNNNNINNINNNNNNNSNNSNNSNNNKTIKNTRNIIADDDGGNEDTTLGSPFSSPSIGSPPMSSPSPKMLKQELHSPLLTSEKDEDEEEEGEEEEDIEMEQLELDDHDKNTTINMTANGSRGNLRKGMNQFVKTIPQNIKQLNSQISNSFLKFGGMVKGDKSNDKNNDKSNDKNNNKNNKNNNNNNNLNDEDNFDMMTSQIEKVLNNKDNMKLMESCTFTTKENFQTAFVDQVNKVDSFFVERYRKTKEKCVELCNMIPFLSTNEQLRTIRNIEFVKQGFQDNYHYLESLEAFKELNIKGFKKVLEKYEKKNRIISSECRKYLENTRIFENDSPVRFLSHRIKHLYARYFTGNDVKLASNQIKTYAEDERFQKYNLFTIGLLIGVCIVLGIQVVFNYYYYYPHEQPPIDSPLAWLLFRISLLPILLGTMFSLMSFIWEKSGINYVFIFEFKPDHKRSPGRYLKYGLIFNTLWLLALNLYIDSSSHQNTTRYLILIPIVFVLITLIIGIQPFPIMAHRTRFWVLKKIVKVVSAPWVPVRFPDFFMSVQLLSLGEFLFNIQSMVCVFNYSALDPEEVKFCSQSRFFALPVLNALPYWWRVAQCFRRYYETRQFFPHITSAIRSIFSIIALVLNYIALEYSQHDWSIIKIAWFGINVVGSFYKFYADMSVDWGFFNNYKTNPAWPLREKLVFKKKWIYYVAITLDFFLRFTWLIIFSIRKGSKHRLDNPLFLFFFSLTEVVWATQFIFFRVESEHVQSPDTYSSFQDIPIPFSQEYNNYMDEKKKRRKRKQKQSKSNNNNNNNNNNNNNNNNRLHHNDSSNNVETDETITSSNNTDSSHQKQPLTHNRHHNHNHNHQDHHDLSINDHMNPDTGDINFDSKIDYKDDEAYNLRQSSLRTSISRNASHVDLGRVSSHNDLNISRG.

Residues 1-483 (MKFRDLLNDH…RIISSECRKY (483 aa)) enclose the SPX domain. Disordered regions lie at residues 86–118 (ETADSPAIPSPIISHSNINSNNNNNGGTNSVGF), 160–271 (QRNN…HDKN), and 318–354 (VKGDKSNDKNNDKSNDKNNNKNNKNNNNNNNLNDEDN). 3 stretches are compositionally biased toward low complexity: residues 90–110 (SPAIPSPIISHSNINSNNNNN), 161–196 (RNNNNNINNINNNNNNNSNNSNNSNNNKTIKNTRNI), and 211–228 (SPFSSPSIGSPPMSSPSP). The segment covering 244–264 (KDEDEEEEGEEEEDIEMEQLE) has biased composition (acidic residues). Positions 319-336 (KGDKSNDKNNDKSNDKNN) are enriched in basic and acidic residues. Positions 337–349 (NKNNKNNNNNNNL) are enriched in low complexity. 9 consecutive transmembrane segments (helical) span residues 536-556 (NLFTIGLLIGVCIVLGIQVVF), 573-593 (LAWLLFRISLLPILLGTMFSL), 622-642 (YLKYGLIFNTLWLLALNLYID), 654-674 (ILIPIVFVLITLIIGIQPFPI), 703-723 (FFMSVQLLSLGEFLFNIQSMV), 776-796 (ITSAIRSIFSIIALVLNYIAL), 803-823 (WSIIKIAWFGINVVGSFYKFY), 854-874 (WIYYVAITLDFFLRFTWLIIF), and 887-907 (PLFLFFFSLTEVVWATQFIFF). One can recognise an EXS domain in the interval 738–940 (FCSQSRFFAL…SQEYNNYMDE (203 aa)). The disordered stretch occupies residues 939 to 1031 (DEKKKRRKRK…INDHMNPDTG (93 aa)). Over residues 942–951 (KKRRKRKQKQ) the composition is skewed to basic residues. Residues 952–970 (SKSNNNNNNNNNNNNNNNN) show a composition bias toward low complexity. Over residues 977–1003 (SSNNVETDETITSSNNTDSSHQKQPLT) the composition is skewed to polar residues. Positions 1013–1022 (NHQDHHDLSI) are enriched in basic and acidic residues.

Belongs to the SYG1 (TC 2.A.94) family.

The protein localises to the membrane. The protein is SPX and EXS domain-containing protein 4 of Dictyostelium discoideum (Social amoeba).